The sequence spans 227 residues: Cytochrome c oxidase subunit 2 (227 aa).

Over 1 to 14 (MAYPLQLGLQDATS) the chain is Mitochondrial intermembrane. The helical transmembrane segment at 15–45 (PIMEELTSFHDHTLMIVFLISSLVLYIISSM) threads the bilayer. At 46-59 (LTTKMTHTNTMDAQ) the chain is on the mitochondrial matrix side. Residues 60 to 87 (GVETIWTILPAAILVLIALPSLRILYMM) traverse the membrane as a helical segment. Topologically, residues 88–227 (DEINNPALTV…HFENWSASMI (140 aa)) are mitochondrial intermembrane. 6 residues coordinate Cu cation: histidine 161, cysteine 196, glutamate 198, cysteine 200, histidine 204, and methionine 207. Glutamate 198 lines the Mg(2+) pocket.

It belongs to the cytochrome c oxidase subunit 2 family. Component of the cytochrome c oxidase (complex IV, CIV), a multisubunit enzyme composed of 14 subunits. The complex is composed of a catalytic core of 3 subunits MT-CO1, MT-CO2 and MT-CO3, encoded in the mitochondrial DNA, and 11 supernumerary subunits COX4I, COX5A, COX5B, COX6A, COX6B, COX6C, COX7A, COX7B, COX7C, COX8 and NDUFA4, which are encoded in the nuclear genome. The complex exists as a monomer or a dimer and forms supercomplexes (SCs) in the inner mitochondrial membrane with NADH-ubiquinone oxidoreductase (complex I, CI) and ubiquinol-cytochrome c oxidoreductase (cytochrome b-c1 complex, complex III, CIII), resulting in different assemblies (supercomplex SCI(1)III(2)IV(1) and megacomplex MCI(2)III(2)IV(2)). Found in a complex with TMEM177, COA6, COX18, COX20, SCO1 and SCO2. Interacts with TMEM177 in a COX20-dependent manner. Interacts with COX20. Interacts with COX16. Requires Cu cation as cofactor.

It is found in the mitochondrion inner membrane. It carries out the reaction 4 Fe(II)-[cytochrome c] + O2 + 8 H(+)(in) = 4 Fe(III)-[cytochrome c] + 2 H2O + 4 H(+)(out). Component of the cytochrome c oxidase, the last enzyme in the mitochondrial electron transport chain which drives oxidative phosphorylation. The respiratory chain contains 3 multisubunit complexes succinate dehydrogenase (complex II, CII), ubiquinol-cytochrome c oxidoreductase (cytochrome b-c1 complex, complex III, CIII) and cytochrome c oxidase (complex IV, CIV), that cooperate to transfer electrons derived from NADH and succinate to molecular oxygen, creating an electrochemical gradient over the inner membrane that drives transmembrane transport and the ATP synthase. Cytochrome c oxidase is the component of the respiratory chain that catalyzes the reduction of oxygen to water. Electrons originating from reduced cytochrome c in the intermembrane space (IMS) are transferred via the dinuclear copper A center (CU(A)) of subunit 2 and heme A of subunit 1 to the active site in subunit 1, a binuclear center (BNC) formed by heme A3 and copper B (CU(B)). The BNC reduces molecular oxygen to 2 water molecules using 4 electrons from cytochrome c in the IMS and 4 protons from the mitochondrial matrix. This chain is Cytochrome c oxidase subunit 2 (MT-CO2), found in Acomys ignitus (Fiery spiny mouse).